The primary structure comprises 248 residues: Probable transcriptional regulatory protein Mnod_7401 (248 aa).

This sequence belongs to the TACO1 family.

It is found in the cytoplasm. In Methylobacterium nodulans (strain LMG 21967 / CNCM I-2342 / ORS 2060), this protein is Probable transcriptional regulatory protein Mnod_7401.